The following is a 410-amino-acid chain: Chloride intracellular channel protein 5 (410 aa).

The short motif at 191 to 194 (CPFS) is the G-site element. The chain crosses the membrane as a helical span at residues 193–213 (FSQRLFMILWLKGVVFNVTTV). Residues 260-400 (YPKLAAKHRE…AADSEIELAY (141 aa)) enclose the GST C-terminal domain.

It belongs to the chloride channel CLIC family. As to quaternary structure, component of a multimeric complex consisting of several cytoskeletal proteins, including actin, ezrin, alpha-actinin, gelsolin, and IQGAP1. Interacts with AKAP9. Interacts with TPRN. TPRN, CLIC5 and PTPQR form concentric rings at the base of stereocilia and may form a complex. Interacts with EZR, MYO6 and RDX; the proteins may work together as a complex to stabilize linkages between the plasma membrane and subjacent actin cytoskeleton at the stereocilium base. As to expression, widely expressed in both fetal and adult human tissues. Isoform 1 is expressed in renal glomeruli endothelial cells and podocytes (at protein level).

The protein resides in the cytoplasm. It localises to the cytoskeleton. It is found in the cell cortex. Its subcellular location is the membrane. The protein localises to the apical cell membrane. The protein resides in the mitochondrion. It localises to the cell projection. It is found in the stereocilium. Its subcellular location is the golgi apparatus. The protein localises to the microtubule organizing center. The protein resides in the centrosome. It catalyses the reaction chloride(in) = chloride(out). The catalysed reaction is Na(+)(in) = Na(+)(out). It carries out the reaction K(+)(in) = K(+)(out). With respect to regulation, inhibited by F-actin. Functionally, in the soluble state, catalyzes glutaredoxin-like thiol disulfide exchange reactions with reduced glutathione as electron donor. Can insert into membranes and form non-selective ion channels almost equally permeable to Na(+), K(+) and Cl(-). Required for normal hearing. It is necessary for the formation of stereocilia in the inner ear and normal development of the organ of Corti. May play a role in the regulation of transepithelial ion absorption and secretion. Is required for the development and/or maintenance of the proper glomerular endothelial cell and podocyte architecture. Plays a role in formation of the lens suture in the eye, which is important for normal optical properties of the lens. In Homo sapiens (Human), this protein is Chloride intracellular channel protein 5.